The chain runs to 390 residues: COP9/Signalosome and eIF3 complex-shared subunit 1 (390 aa).

Residues 188-351 enclose the PCI domain; sequence QAAKVMTALL…RTLIVSSYQH (164 aa).

It belongs to the eIF-3 subunit M family. As to quaternary structure, component of the eukaryotic translation initiation factor 3 (eIF-3) complex. Within the eIF-3 complex, interacts directly with eif-3.F. Component of the CSN complex, composed of csn-1, csn-2, csn-3, csn-4, csn-5, csn-6 and csn-7. Within the CSN complex, interacts directly with csn-1 and csn-4.

The protein resides in the cytoplasm. Its function is as follows. Component of the eukaryotic translation initiation factor 3 (eIF-3) complex, which is involved in protein synthesis of a specialized repertoire of mRNAs and, together with other initiation factors, stimulates binding of mRNA and methionyl-tRNAi to the 40S ribosome. The eIF-3 complex specifically targets and initiates translation of a subset of mRNAs involved in cell proliferation (Potential). Component of the COP9 signalosome complex (CSN), a complex involved in various cellular and developmental processes. The CSN complex is an essential regulator of the ubiquitin (Ubl) conjugation pathway by mediating the deneddylation of the cullin subunits of the SCF-type E3 ligase complexes, leading to decrease the Ubl ligase activity of SCF. The CSN complex plays an essential role in embryogenesis and oogenesis and is required to regulate microtubule stability in the early embryo. Mediates mei-1 targeting for degradation at the meiosis to mitosis transition via deneddylation of cul-3. This chain is COP9/Signalosome and eIF3 complex-shared subunit 1, found in Caenorhabditis elegans.